Consider the following 270-residue polypeptide: Phosphatidylglycerol--prolipoprotein diacylglyceryl transferase (270 aa).

The next 4 helical transmembrane spans lie at 19 to 39 (FPVY…LWLA), 56 to 76 (LVLI…VIFE), 92 to 112 (QGGL…ILFA), and 116 to 136 (GVSF…GQAI). Residue arginine 138 participates in a 1,2-diacyl-sn-glycero-3-phospho-(1'-sn-glycerol) binding. 3 consecutive transmembrane segments (helical) span residues 178-198 (HPTF…LLAL), 206-226 (GELF…VEGL), and 236-256 (LRIA…FIIV).

It belongs to the Lgt family.

The protein localises to the cell membrane. It carries out the reaction L-cysteinyl-[prolipoprotein] + a 1,2-diacyl-sn-glycero-3-phospho-(1'-sn-glycerol) = an S-1,2-diacyl-sn-glyceryl-L-cysteinyl-[prolipoprotein] + sn-glycerol 1-phosphate + H(+). Its pathway is protein modification; lipoprotein biosynthesis (diacylglyceryl transfer). Its function is as follows. Catalyzes the transfer of the diacylglyceryl group from phosphatidylglycerol to the sulfhydryl group of the N-terminal cysteine of a prolipoprotein, the first step in the formation of mature lipoproteins. The polypeptide is Phosphatidylglycerol--prolipoprotein diacylglyceryl transferase (Bacillus cereus (strain Q1)).